The chain runs to 530 residues: uncharacterized protein (530 aa).

Residues 485-529 (SKEENREIKLSIRENKEKQRKKSVEKSVSKLQNQLNRLLNKNTIE) are a coiled coil.

This is an uncharacterized protein from Acanthamoeba polyphaga (Amoeba).